Here is a 242-residue protein sequence, read N- to C-terminus: Terpene cyclase dpchB (242 aa).

7 consecutive transmembrane segments (helical) span residues 16 to 36 (VVWIADTCKLIMGIGWTANYV), 51 to 71 (ALLPLCCNFAWELTYAIMYAF), 78 to 95 (YVHFSGLLLNCGVMYTAV), 114 to 134 (LIFVLAVAGFASAHVVLAKQV), 141 to 161 (AWSAYACQLLLSVGGLCQLLC), 169 to 189 (SYFLWFSRFFGSLVLVPQDII), and 207 to 227 (IWFVTIFLILDGSYGLCLWYV).

It belongs to the paxB family.

The protein localises to the membrane. Its pathway is secondary metabolite biosynthesis; terpenoid biosynthesis. Its function is as follows. Terpene cyclase; part of the gene cluster that mediates the biosynthesis of the diterpenoid pyrones higginsianins A and B. The first step of the pathway is the synthesis of the alpha-pyrone moiety by the polyketide synthase dpchA via condensation of one acetyl-CoA starter unit with 3 malonyl-CoA units and 2 methylations. The alpha-pyrone is then combined with geranylgeranyl pyrophosphate (GGPP) formed by the GGPP synthase dpchD through the action of the prenyltransferase dpchC to yield a linear alpha-pyrone diterpenoid. Subsequent steps in the diterpenoid pyrone biosynthetic pathway involve the decalin core formation, which is initiated by the epoxidation of the C10-C11 olefin by the FAD-dependent oxidoreductase dpchE, and is followed by a cyclization cascade catalyzed by the terpene cyclase dpchB. The short chain dehydrogenase/reductase dpchG then oxidizes the 8S hydroxy group to a ketone and the short chain dehydrogenase/reductase dpchH reduces the ketone to the 8R hydroxy group to yield higginsianin B. Finally, the FAD-dependent oxidoreductase dpchF converts higginsianin B into higginsianin A. The polypeptide is Terpene cyclase dpchB (Colletotrichum higginsianum (strain IMI 349063) (Crucifer anthracnose fungus)).